The primary structure comprises 583 residues: ATP-dependent lipid A-core flippase (583 aa).

A run of 5 helical transmembrane segments spans residues 27–47 (LAVA…MVSL), 69–89 (LLVF…TYCL), 142–162 (ALVS…LMFY), 165–185 (WQLS…IGFV), and 249–269 (AAAN…VLYL). Residues 28 to 310 (AVAVVALIIN…LTNVTSQFQR (283 aa)) enclose the ABC transmembrane type-1 domain. Residues 342–578 (VNVKDISFTY…DGAYAQLHRI (237 aa)) form the ABC transporter domain. 376-383 (GRSGSGKS) serves as a coordination point for ATP.

The protein belongs to the ABC transporter superfamily. Lipid exporter (TC 3.A.1.106) family. Homodimer.

The protein localises to the cell inner membrane. It catalyses the reaction ATP + H2O + lipid A-core oligosaccharideSide 1 = ADP + phosphate + lipid A-core oligosaccharideSide 2.. Its function is as follows. Involved in lipopolysaccharide (LPS) biosynthesis. Translocates lipid A-core from the inner to the outer leaflet of the inner membrane. Transmembrane domains (TMD) form a pore in the inner membrane and the ATP-binding domain (NBD) is responsible for energy generation. The protein is ATP-dependent lipid A-core flippase of Vibrio vulnificus (strain CMCP6).